The sequence spans 414 residues: Transcriptional repressor protein YY1 (414 aa).

The interval 1-170 is interaction with the SMAD1/SMAD4 complex; that stretch reads MASGDTLYIA…GGGSSSSGGG (170 aa). Residues 33-81 form a disordered region; it reads VETIETTVVGEEEEEDDDDEDGGGGDHGGGGGHGHAGHHHHHHHHHHHP. Over residues 42 to 55 the composition is skewed to acidic residues; the sequence is GEEEEEDDDDEDGG. Over residues 57 to 66 the composition is skewed to gly residues; that stretch reads GDHGGGGGHG. Positions 67–81 are enriched in basic residues; sequence HAGHHHHHHHHHHHP. Residues 116 to 260 are gly-rich region involved in interaction with HCFC1; the sequence is DDSDGLRAED…YSEYMTGKKL (145 aa). Ser118 is subject to Phosphoserine; by CK2. The disordered stretch occupies residues 157–203; that stretch reads GKSGGGGSSSSGGGRVKKGGGKKSGKKSYLSGGAGAAGGGGADPGNK. Over residues 158–170 the composition is skewed to gly residues; it reads KSGGGGSSSSGGG. Residues 171-182 are compositionally biased toward basic residues; sequence RVKKGGGKKSGK. Residues Lys182 and Lys183 each participate in a glycyl lysine isopeptide (Lys-Gly) (interchain with G-Cter in SUMO2) cross-link. Position 187 is a phosphoserine (Ser187). Gly residues predominate over residues 188–199; the sequence is GGAGAAGGGGAD. Residues Lys208 and Lys230 each participate in a glycyl lysine isopeptide (Lys-Gly) (interchain with G-Cter in SUMO2) cross-link. The residue at position 247 (Ser247) is a Phosphoserine. An involved in nuclear matrix association region spans residues 257–341; it reads GKKLPPGGIP…KAFVESSKLK (85 aa). Glycyl lysine isopeptide (Lys-Gly) (interchain with G-Cter in SUMO2) cross-links involve residues Lys286 and Lys288. The segment at 295-414 is binding to DNA; it reads TIACPHKGCT…LTHAKAKNNQ (120 aa). C2H2-type zinc fingers lie at residues 296 to 320, 325 to 347, and 353 to 377; these read IACP…LHTH, HVCA…QLVH, and FQCT…VRIH. The Zn(2+) site is built by Cys298, Cys303, His316, His320, Cys327, Cys330, His343, His347, Cys355, Cys360, His373, and His377. The interval 333-371 is involved in repression of activated transcription; sequence AFVESSKLKRHQLVHTGEKPFQCTFEGCGKRFSLDFNLR. Residues 371–397 are involved in masking transactivation domain; sequence RTHVRIHTGDRPYVCPFDGCNKKFAQS. A Phosphothreonine modification is found at Thr378. A C2H2-type 4 zinc finger spans residues 383-407; it reads YVCPFDGCNKKFAQSTNLKSHILTH. Zn(2+) is bound by residues Cys385, Cys390, His403, and His407. Glycyl lysine isopeptide (Lys-Gly) (interchain with G-Cter in SUMO2) cross-links involve residues Lys409 and Lys411.

Belongs to the YY transcription factor family. As to quaternary structure, interacts with YAF2 through the region encompassing the first and second zinc fingers. Component of the chromatin remodeling INO80 complex; specifically part of a complex module associated with the DBINO domain of INO80. Interacts with EED and EZH2; the interactions are indicative for an association with the PRC2/EED-EZH2 complex. Interacts with SFMBT2. Found in a complex with SMAD1 and SMAD4. Found in a complex with YY1, SIN3A and HDAC1. Accessory component of the polycomb repressive deubiquitinase (PR-DUB) complex, at least composed of BAP1, one of ASXL1, ASXL2 or (probably) ASXL3 and one of MBD5 or MBD6; the PR-DUB core associates with a number of accessory proteins, including FOXK1, FOXK2, KDM1B, HCFC1, YY1 and OGT. Interacts (via Gly-rich region) with HCFC1; the interaction is direct. Interacts (via C-terminal zinc-finger domains) with BAP1 (via ULD domain); the interaction is direct and requires HCFC1. In terms of processing, phosphorylation at Ser-118 by CK2 prevents proteolytic cleavage by caspase-7 (CASP7) during apoptosis. Post-translationally, proteolytically cleaved by caspase-7 (CASP7) in response to apoptosis. Phosphorylation at Ser-118 protects against proteolytic cleavage. Transiently poly-ADP-ribosylated by PARP1 upon DNA damage, with the effect of decreasing affinity of YY1 to its cognate DNA binding sites. In terms of processing, ubiquitinated.

It localises to the nucleus matrix. Its function is as follows. Multifunctional transcription factor that exhibits positive and negative control on a large number of cellular and viral genes by binding to sites overlapping the transcription start site. Binds to the consensus sequence 5'-CCGCCATNTT-3'; some genes have been shown to contain a longer binding motif allowing enhanced binding; the initial CG dinucleotide can be methylated greatly reducing the binding affinity. The effect on transcription regulation is depending upon the context in which it binds and diverse mechanisms of action include direct activation or repression, indirect activation or repression via cofactor recruitment, or activation or repression by disruption of binding sites or conformational DNA changes. Its activity is regulated by transcription factors and cytoplasmic proteins that have been shown to abrogate or completely inhibit YY1-mediated activation or repression. For example, it acts as a repressor in absence of adenovirus E1A protein but as an activator in its presence. Acts synergistically with the SMAD1 and SMAD4 in bone morphogenetic protein (BMP)-mediated cardiac-specific gene expression. Binds to SMAD binding elements (SBEs) (5'-GTCT/AGAC-3') within BMP response element (BMPRE) of cardiac activating regions. May play an important role in development and differentiation. Proposed to recruit the PRC2/EED-EZH2 complex to target genes that are transcriptional repressed. Involved in DNA repair. In vitro, binds to DNA recombination intermediate structures (Holliday junctions). Plays a role in regulating enhancer activation. Recruits the PR-DUB complex to specific gene-regulatory regions. Proposed core component of the chromatin remodeling INO80 complex which is involved in transcriptional regulation, DNA replication and probably DNA repair; proposed to target the INO80 complex to YY1-responsive elements. The chain is Transcriptional repressor protein YY1 (YY1) from Homo sapiens (Human).